The primary structure comprises 377 residues: Succinyl-diaminopimelate desuccinylase 2 (377 aa).

H62 serves as a coordination point for Zn(2+). D64 is an active-site residue. Position 95 (D95) interacts with Zn(2+). E129 functions as the Proton acceptor in the catalytic mechanism. Positions 130, 158, and 350 each coordinate Zn(2+).

This sequence belongs to the peptidase M20A family. DapE subfamily. As to quaternary structure, homodimer. It depends on Zn(2+) as a cofactor. The cofactor is Co(2+).

The enzyme catalyses N-succinyl-(2S,6S)-2,6-diaminopimelate + H2O = (2S,6S)-2,6-diaminopimelate + succinate. It participates in amino-acid biosynthesis; L-lysine biosynthesis via DAP pathway; LL-2,6-diaminopimelate from (S)-tetrahydrodipicolinate (succinylase route): step 3/3. Its function is as follows. Catalyzes the hydrolysis of N-succinyl-L,L-diaminopimelic acid (SDAP), forming succinate and LL-2,6-diaminopimelate (DAP), an intermediate involved in the bacterial biosynthesis of lysine and meso-diaminopimelic acid, an essential component of bacterial cell walls. In Shewanella loihica (strain ATCC BAA-1088 / PV-4), this protein is Succinyl-diaminopimelate desuccinylase 2.